Here is a 774-residue protein sequence, read N- to C-terminus: Dapper homolog 2 (774 aa).

Positions 67–93 form a coiled coil; that stretch reads PEQQLEAALAALQEQLSRLRQQDIGLK. 4 disordered regions span residues 188 to 225, 295 to 319, 345 to 500, and 624 to 710; these read RPQA…LDRA, TPQR…TIQT, TPAK…EKIK, and CPES…GAQS. Residues 438-452 show a composition bias toward polar residues; that stretch reads VQASPSSKAQQTPSA. Positions 637–648 are enriched in low complexity; the sequence is RRAGGPLARGRP. 2 stretches are compositionally biased toward basic and acidic residues: residues 655-672 and 686-700; these read AYTR…ECDP and SSDH…RESS. The PDZ-binding motif lies at 771–774; it reads MTMV.

Belongs to the dapper family. As to quaternary structure, can form homodimers and heterodimers with DACT1 or DACT3. Interacts with CSNK1D, PKA catalytic subunit, PKC-type kinase, CSNK2B, DVL1, DVL2, DVL3, VANGL1, VANGL2, TGFBR1, CTNNB1, CTNND2, CTNND1, LEF1, TCF7, TCF7L1 and HDAC1.

Its function is as follows. Involved in regulation of intracellular signaling pathways during development. Negatively regulates the Nodal signaling pathway, possibly by promoting the lysosomal degradation of Nodal receptors, such as TGFBR1. May be involved in control of the morphogenetic behavior of kidney ureteric bud cells by keeping cells epithelial and restraining their mesenchymal character. May play an inhibitory role in the re-epithelialization of skin wounds by attenuating TGF-beta signaling. The sequence is that of Dapper homolog 2 (DACT2) from Homo sapiens (Human).